The sequence spans 646 residues: MALSVQDCARLTGQSVPAMERFSPLRNIWNRVREYARAATTAAGITWLSRYVYHYHRLMLEDLAPGTPATLRWPLYREPPPHFLVGYQYLVRTCNDYVFESRAYSRLRYTEITQPGMQVVNWSVMANCTYTINTGSYHRFVDLDDFQNTLTQIQQAVLAERVVADLALLQPLRGFGSTRMADRGELEIPVESLMQDYYKDLRRCQNEAWGMADRLRIQQAGPKDVTLLATIRRLKTAYFNFLISSITSSAASLRIPHATVLSLPCDCDWLEAFLEKFSDPVQLDSLNEAWQSLPMQQMIRCTVSALSLPQGPHLLPPLSGSGMQGGVFELRPRENGRAVTETMRRRRGEMIQRFIDRLPVRRRRRRQPVPAPVSPEGPAVEEEEFMEIEETPAAFEQEVRETVAEAIRLLQEELTFAARNSQFFNFAVDFYEAMDRLEALGDINEMTLRRWVMYFFVCEHIATTLNYLFQRLRNYAVFARHVELNIAQVVMRARNTVGDVVYSRVWNENGLNAFSQLMRRISNDLAATVERAGHGELQDEEIDQFMSEIAYQDNSGDVQEILRQAAVNDADIDSVELSFRFRVRGPVVFSQRRHIQDLNRRVVAYASQLRAQHQPLPELHADVPLPPLQANPHPPLPPDARPQRTM.

Residues 357–366 carry the Nuclear localization signal motif; sequence RLPVRRRRRR. The residue at position 555 (Ser-555) is an O-(5'-phospho-DNA)-serine. The segment at 619 to 646 is disordered; that stretch reads LHADVPLPPLQANPHPPLPPDARPQRTM. The segment covering 624–640 has biased composition (pro residues); the sequence is PLPPLQANPHPPLPPDA.

It belongs to the adenoviridae terminal protein family. In terms of assembly, heterodimer with the polymerase; this heterodimer binds to bp 9 to 18 of the genome. Interacts with host POU2F1; POU2F1 binds to the auxiliary sequences in the inverted terminal repeats and tethers the pTP-POL heterodimer to the origin DNA thereby participating in the assembly of the pre-initiation complex (POL-TP-DBP-NFIA-POU2F1). Preterminal protein is used to replicate viral genome, upon genomic encapsidation it is processed first into iTP and finally into TP by adenovirus protease.

Its subcellular location is the host nucleus matrix. Protein covalently bound to the viral DNA that acts as a primer for viral genomic replication by DNA strand displacement. Assembles on the viral origin of replication in an initiation complex with viral polymerase, DBP, host NFIA and host POU2F1/OCT1. During initiation, the polymerase covalently couples the first dCTP with Ser-580 of pTP. The terminal protein stimulates the template activity over 20 fold compared to protein-free templates. Neo-synthesized viral genomes are linked to two preterminal proteins, one for each 5' end. These new genomes are encapsidated in the nucleus, and during capsid maturation by viral protease, preterminal protein is first cleaved into intermediary (iTP), then into mature TP. May play a role in host nuclear matrix localization of genomic DNA. In Homo sapiens (Human), this protein is Preterminal protein.